The following is a 303-amino-acid chain: Mycothiol acetyltransferase (303 aa).

N-acetyltransferase domains follow at residues 6-134 and 154-303; these read TSLA…VEGD and NEAY…QSSS. Residue Glu-37 participates in 1D-myo-inositol 2-(L-cysteinylamino)-2-deoxy-alpha-D-glucopyranoside binding. Residues 75 to 77 and 83 to 88 each bind acetyl-CoA; these read VVV and RQGYGS. 1D-myo-inositol 2-(L-cysteinylamino)-2-deoxy-alpha-D-glucopyranoside-binding residues include Glu-180, Lys-221, and Glu-233. Residues 237 to 239 and 244 to 250 each bind acetyl-CoA; these read VGL and RRRGLGD. Tyr-271 is a binding site for 1D-myo-inositol 2-(L-cysteinylamino)-2-deoxy-alpha-D-glucopyranoside. Residue 276 to 281 participates in acetyl-CoA binding; sequence NESARR.

The protein belongs to the acetyltransferase family. MshD subfamily. Monomer.

The catalysed reaction is 1D-myo-inositol 2-(L-cysteinylamino)-2-deoxy-alpha-D-glucopyranoside + acetyl-CoA = mycothiol + CoA + H(+). Its function is as follows. Catalyzes the transfer of acetyl from acetyl-CoA to desacetylmycothiol (Cys-GlcN-Ins) to form mycothiol. In Corynebacterium diphtheriae (strain ATCC 700971 / NCTC 13129 / Biotype gravis), this protein is Mycothiol acetyltransferase.